Consider the following 140-residue polypeptide: Ribosome-binding factor A (140 aa).

Positions 1–13 (MQKKSSSKSHRAT) are enriched in basic residues. The segment at 1-22 (MQKKSSSKSHRATRGPSQRQLR) is disordered.

This sequence belongs to the RbfA family. In terms of assembly, monomer. Binds 30S ribosomal subunits, but not 50S ribosomal subunits or 70S ribosomes.

The protein resides in the cytoplasm. Its function is as follows. One of several proteins that assist in the late maturation steps of the functional core of the 30S ribosomal subunit. Associates with free 30S ribosomal subunits (but not with 30S subunits that are part of 70S ribosomes or polysomes). Required for efficient processing of 16S rRNA. May interact with the 5'-terminal helix region of 16S rRNA. This chain is Ribosome-binding factor A, found in Parvibaculum lavamentivorans (strain DS-1 / DSM 13023 / NCIMB 13966).